Here is an 80-residue protein sequence, read N- to C-terminus: UPF0270 protein ASA_3305 (80 aa).

The protein belongs to the UPF0270 family.

The polypeptide is UPF0270 protein ASA_3305 (Aeromonas salmonicida (strain A449)).